A 276-amino-acid chain; its full sequence is UPF0328 protein ECU01_0090/ECU01_1520/ECU02_1550/ECU08_0020 (276 aa).

The tract at residues M1–H24 is disordered.

Belongs to the UPF0328 family.

The sequence is that of UPF0328 protein ECU01_0090/ECU01_1520/ECU02_1550/ECU08_0020 from Encephalitozoon cuniculi (strain GB-M1) (Microsporidian parasite).